Consider the following 226-residue polypeptide: 7-cyano-7-deazaguanine synthase (226 aa).

8–18 (ISGGLDSTTCL) contacts ATP. The Zn(2+) site is built by C188, C198, C201, and C204.

The protein belongs to the QueC family. It depends on Zn(2+) as a cofactor.

The enzyme catalyses 7-carboxy-7-deazaguanine + NH4(+) + ATP = 7-cyano-7-deazaguanine + ADP + phosphate + H2O + H(+). It participates in purine metabolism; 7-cyano-7-deazaguanine biosynthesis. In terms of biological role, catalyzes the ATP-dependent conversion of 7-carboxy-7-deazaguanine (CDG) to 7-cyano-7-deazaguanine (preQ(0)). The protein is 7-cyano-7-deazaguanine synthase of Coxiella burnetii (strain RSA 493 / Nine Mile phase I).